Reading from the N-terminus, the 212-residue chain is Maleylacetoacetate isomerase (212 aa).

A GST N-terminal domain is found at 1–83 (MKLYTYYRST…YLEERYPQPA (83 aa)). Residues 88–211 (DPLRRARERG…HPANQPDTPA (124 aa)) enclose the GST C-terminal domain.

Belongs to the GST superfamily. Zeta family.

The enzyme catalyses 4-maleylacetoacetate = 4-fumarylacetoacetate. It participates in amino-acid degradation; L-phenylalanine degradation; acetoacetate and fumarate from L-phenylalanine: step 5/6. The sequence is that of Maleylacetoacetate isomerase (maiA) from Pseudomonas aeruginosa (strain ATCC 15692 / DSM 22644 / CIP 104116 / JCM 14847 / LMG 12228 / 1C / PRS 101 / PAO1).